Here is a 159-residue protein sequence, read N- to C-terminus: Ribosome maturation factor RimP (159 aa).

Belongs to the RimP family.

It localises to the cytoplasm. Functionally, required for maturation of 30S ribosomal subunits. In Trichlorobacter lovleyi (strain ATCC BAA-1151 / DSM 17278 / SZ) (Geobacter lovleyi), this protein is Ribosome maturation factor RimP.